We begin with the raw amino-acid sequence, 243 residues long: MRTPSLSLALSVLSLLVLGSGHYAAGLELNGTSSGKGEPSSGDHSAGGLVVSEVSTISEMPSGSELSTGDYDYSEEYDNEPQISGYIVDDSVRVEQVIKPKENKTEGEKSSEKPKRKKKGGKGGKGRRNRKKKKNPCAAKFQNFCIHGECRYIENLEVVTCHCHQDYFGERCGEKTMKTQKKDDSDLSKIALAAIIVFVSAVSVAAIGIITAVLLRKRFFREYEEAEERRRLRQENGTAHAIA.

Residues 1 to 24 (MRTPSLSLALSVLSLLVLGSGHYA) form the signal peptide. Residues 25–96 (AGLELNGTSS…IVDDSVRVEQ (72 aa)) constitute a propeptide that is removed on maturation. Residue N30 is glycosylated (N-linked (GlcNAc...) asparagine). The segment covering 55–67 (STISEMPSGSELS) has biased composition (polar residues). Disordered regions lie at residues 55–75 (STISEMPSGSELSTGDYDYSE) and 98–135 (IKPKENKTEGEKSSEKPKRKKKGGKGGKGRRNRKKKKN). Residues 98–113 (IKPKENKTEGEKSSEK) are compositionally biased toward basic and acidic residues. An N-linked (GlcNAc...) asparagine glycan is attached at N103. Over residues 114–135 (PKRKKKGGKGGKGRRNRKKKKN) the composition is skewed to basic residues. Residues 133–173 (KKNPCAAKFQNFCIHGECRYIENLEVVTCHCHQDYFGERCG) form the EGF-like domain. Cystine bridges form between C137–C150, C145–C161, and C163–C172. Residues 190-213 (IALAAIIVFVSAVSVAAIGIITAV) form a helical membrane-spanning segment. N236 carries an N-linked (GlcNAc...) asparagine glycan.

This sequence belongs to the amphiregulin family. In terms of assembly, the immature precursor interacts with CNIH.

The protein localises to the membrane. Its function is as follows. Ligand of the EGF receptor/EGFR. Autocrine growth factor as well as a mitogen for a broad range of target cells including astrocytes, Schwann cells and fibroblasts. The polypeptide is Amphiregulin (Areg) (Rattus norvegicus (Rat)).